The sequence spans 323 residues: Protoheme IX farnesyltransferase (323 aa).

The next 8 membrane-spanning stretches (helical) occupy residues 28–48, 50–70, 101–121, 122–142, 150–170, 178–198, 235–255, and 282–302; these read IIPLLLITTAAAMWIASEGRV, LFTLFITLIGGTLAAAAAQVM, FIFAVILAILSFSLFALFVNL, LSGLLAMSGIVFYMLVYTHLL, IVIGGAAGSIPPLVGWAAVTG, ILFAIIFLWTPPHFWALALMI, FLLVYPLGVSGAVYGGIAIIL, and FSIFYLMLLCTAMVIDSLPLT.

The protein belongs to the UbiA prenyltransferase family. Protoheme IX farnesyltransferase subfamily.

Its subcellular location is the cell inner membrane. The catalysed reaction is heme b + (2E,6E)-farnesyl diphosphate + H2O = Fe(II)-heme o + diphosphate. The protein operates within porphyrin-containing compound metabolism; heme O biosynthesis; heme O from protoheme: step 1/1. Its function is as follows. Converts heme B (protoheme IX) to heme O by substitution of the vinyl group on carbon 2 of heme B porphyrin ring with a hydroxyethyl farnesyl side group. The chain is Protoheme IX farnesyltransferase from Rippkaea orientalis (strain PCC 8801 / RF-1) (Cyanothece sp. (strain PCC 8801)).